We begin with the raw amino-acid sequence, 432 residues long: Serine--tRNA ligase (432 aa).

238 to 240 serves as a coordination point for L-serine; that stretch reads TAE. Residue 269–271 participates in ATP binding; it reads RSE. An L-serine-binding site is contributed by Glu292. 357 to 360 is a binding site for ATP; that stretch reads EISS. Ser393 is a binding site for L-serine.

It belongs to the class-II aminoacyl-tRNA synthetase family. Type-1 seryl-tRNA synthetase subfamily. Homodimer. The tRNA molecule binds across the dimer.

It localises to the cytoplasm. The catalysed reaction is tRNA(Ser) + L-serine + ATP = L-seryl-tRNA(Ser) + AMP + diphosphate + H(+). The enzyme catalyses tRNA(Sec) + L-serine + ATP = L-seryl-tRNA(Sec) + AMP + diphosphate + H(+). Its pathway is aminoacyl-tRNA biosynthesis; selenocysteinyl-tRNA(Sec) biosynthesis; L-seryl-tRNA(Sec) from L-serine and tRNA(Sec): step 1/1. Functionally, catalyzes the attachment of serine to tRNA(Ser). Is also able to aminoacylate tRNA(Sec) with serine, to form the misacylated tRNA L-seryl-tRNA(Sec), which will be further converted into selenocysteinyl-tRNA(Sec). The chain is Serine--tRNA ligase from Hyphomonas neptunium (strain ATCC 15444).